The primary structure comprises 322 residues: GATA transcription factor 8 (322 aa).

A disordered region spans residues 93–168 (TLVEKKEDSF…DKDRVKDNVC (76 aa)). A compositionally biased stretch (low complexity) spans 102–141 (FSTNTDSSSSHSQFRSSSPVSVLESSSSSSQTTNTTSLVL). Over residues 144–154 (KHGRPRTKRPR) the composition is skewed to basic residues. Positions 147–154 (RPRTKRPR) match the Nuclear localization signal motif. The segment at 225–279 (QYPLRKCMHCEVTKTPQWRLGPMGPKTLCNACGVRYKSGRLFPEYRPAASPTFTP) adopts a GATA-type zinc-finger fold.

Belongs to the type IV zinc-finger family. Class A subfamily.

It is found in the nucleus. Its function is as follows. Transcriptional activator that specifically binds 5'-GATA-3' or 5'-GAT-3' motifs within gene promoters. May be involved in the regulation of some light-responsive genes. The protein is GATA transcription factor 8 (GATA8) of Arabidopsis thaliana (Mouse-ear cress).